Consider the following 639-residue polypeptide: 1-deoxy-D-xylulose-5-phosphate synthase (639 aa).

Thiamine diphosphate-binding positions include H79 and 120 to 122 (GHS). D151 contributes to the Mg(2+) binding site. Residues 152–153 (GS), N180, Y289, and E371 each bind thiamine diphosphate. N180 contributes to the Mg(2+) binding site.

This sequence belongs to the transketolase family. DXPS subfamily. Homodimer. Requires Mg(2+) as cofactor. Thiamine diphosphate is required as a cofactor.

It carries out the reaction D-glyceraldehyde 3-phosphate + pyruvate + H(+) = 1-deoxy-D-xylulose 5-phosphate + CO2. It participates in metabolic intermediate biosynthesis; 1-deoxy-D-xylulose 5-phosphate biosynthesis; 1-deoxy-D-xylulose 5-phosphate from D-glyceraldehyde 3-phosphate and pyruvate: step 1/1. Its function is as follows. Catalyzes the acyloin condensation reaction between C atoms 2 and 3 of pyruvate and glyceraldehyde 3-phosphate to yield 1-deoxy-D-xylulose-5-phosphate (DXP). This is 1-deoxy-D-xylulose-5-phosphate synthase from Agrobacterium fabrum (strain C58 / ATCC 33970) (Agrobacterium tumefaciens (strain C58)).